Reading from the N-terminus, the 479-residue chain is Galactosylgalactosylxylosylprotein 3-beta-glucuronosyltransferase P (479 aa).

Over 1–34 the chain is Cytoplasmic; it reads MKGGNYTSLGTCSGINVSGNVAGTRKMSLGKSIK. The helical; Signal-anchor for type II membrane protein transmembrane segment at 35 to 50 threads the bilayer; the sequence is MYLTIFILTTCIYMAL. Residues 51–479 are Lumenal-facing; it reads YQYHISREPF…EHIDRLLVRP (429 aa). N-linked (GlcNAc...) asparagine glycans are attached at residues Asn-90, Asn-97, Asn-98, and Asn-271. A compositionally biased stretch (low complexity) spans 94–120; it reads NTNNNSTTTSTTTTTAPTTPTTTTTTT. A disordered region spans residues 94–122; it reads NTNNNSTTTSTTTTTAPTTPTTTTTTTVG. Asp-335 serves as a coordination point for Mn(2+). Glu-418 (proton acceptor) is an active-site residue. Asn-460 is a glycosylation site (N-linked (GlcNAc...) asparagine).

It belongs to the glycosyltransferase 43 family. The cofactor is Mn(2+).

It localises to the golgi apparatus membrane. The enzyme catalyses 3-O-(beta-D-galactosyl-(1-&gt;3)-beta-D-galactosyl-(1-&gt;4)-beta-D-xylosyl)-L-seryl-[protein] + UDP-alpha-D-glucuronate = 3-O-(beta-D-GlcA-(1-&gt;3)-beta-D-Gal-(1-&gt;3)-beta-D-Gal-(1-&gt;4)-beta-D-Xyl)-L-seryl-[protein] + UDP + H(+). It functions in the pathway protein modification; protein glycosylation. Functionally, involved in the biosynthesis of L2/HNK-1 carbohydrate epitope on both glycolipids and glycoproteins. Enzyme has a broad specificity. The protein is Galactosylgalactosylxylosylprotein 3-beta-glucuronosyltransferase P (GlcAT-P) of Drosophila melanogaster (Fruit fly).